The chain runs to 371 residues: MPPKQQPKADLAKKQKQVEDKTFGLKNKNKSKNVQKYVQSLKQSVQPKPDATKAAAKKKKEEEKAREQELNELFKVAISQPKVPVGVDPKSILCEFFKAGQCQKGFKCKFSHDLNIQRKGEKIDIYSDTRDEDGDMDEWDQETLEKVVESKKNEYNQNKPTDIVCKYFLDAVEKKQYGWFWSCPNGGKECHYRHALPPGYVLKSQMKALLEEESSKKLAVEDEIENERAKLQTATQMTPALFMEWKRKKIAERDAGLAASQAERAKNDRMSGRELFLSNASLFVDDAEACEEYEREREQEETEQKAKNKEAEAGTSKSSGDAEQSSKEVNEEEEDDDDDDDDLDMDELDELEASLSKTSIQIREPNDEGSS.

A disordered region spans residues 1–64 (MPPKQQPKAD…AAKKKKEEEK (64 aa)). Basic and acidic residues predominate over residues 10–23 (DLAKKQKQVEDKTF). Polar residues predominate over residues 34 to 46 (VQKYVQSLKQSVQ). C3H1-type zinc fingers lie at residues 88 to 115 (DPKS…HDLN) and 159 to 197 (KPTD…HALP). 2 coiled-coil regions span residues 205–237 (QMKA…ATQM) and 283–317 (FVDD…GTSK). Residues 290–371 (CEEYEREREQ…IREPNDEGSS (82 aa)) form a disordered region. Residues 292–312 (EYEREREQEETEQKAKNKEAE) are compositionally biased toward basic and acidic residues. Positions 330–352 (NEEEEDDDDDDDDLDMDELDELE) are enriched in acidic residues.

The sequence is that of Zinc finger CCCH domain-containing protein 21 from Arabidopsis thaliana (Mouse-ear cress).